Reading from the N-terminus, the 318-residue chain is Acetyl-coenzyme A carboxylase carboxyl transferase subunit alpha (318 aa).

The CoA carboxyltransferase C-terminal domain occupies 38 to 292 (ALDRKAEEML…GEAIAAMLGE (255 aa)).

It belongs to the AccA family. Acetyl-CoA carboxylase is a heterohexamer composed of biotin carboxyl carrier protein (AccB), biotin carboxylase (AccC) and two subunits each of ACCase subunit alpha (AccA) and ACCase subunit beta (AccD).

It localises to the cytoplasm. The catalysed reaction is N(6)-carboxybiotinyl-L-lysyl-[protein] + acetyl-CoA = N(6)-biotinyl-L-lysyl-[protein] + malonyl-CoA. Its pathway is lipid metabolism; malonyl-CoA biosynthesis; malonyl-CoA from acetyl-CoA: step 1/1. Its function is as follows. Component of the acetyl coenzyme A carboxylase (ACC) complex. First, biotin carboxylase catalyzes the carboxylation of biotin on its carrier protein (BCCP) and then the CO(2) group is transferred by the carboxyltransferase to acetyl-CoA to form malonyl-CoA. The protein is Acetyl-coenzyme A carboxylase carboxyl transferase subunit alpha of Paracoccus denitrificans (strain Pd 1222).